We begin with the raw amino-acid sequence, 46 residues long: Photosystem II reaction center protein K (46 aa).

The propeptide occupies 1 to 9; sequence MLILFNTFA. A helical transmembrane segment spans residues 25 to 45; the sequence is LPLIPLFFFLLVFVWQAAVGF.

Belongs to the PsbK family. As to quaternary structure, PSII is composed of 1 copy each of membrane proteins PsbA, PsbB, PsbC, PsbD, PsbE, PsbF, PsbH, PsbI, PsbJ, PsbK, PsbL, PsbM, PsbT, PsbX, PsbY, Psb30/Ycf12, peripheral proteins PsbO, CyanoQ (PsbQ), PsbU, PsbV and a large number of cofactors. It forms dimeric complexes.

The protein localises to the cellular thylakoid membrane. One of the components of the core complex of photosystem II (PSII). PSII is a light-driven water:plastoquinone oxidoreductase that uses light energy to abstract electrons from H(2)O, generating O(2) and a proton gradient subsequently used for ATP formation. It consists of a core antenna complex that captures photons, and an electron transfer chain that converts photonic excitation into a charge separation. The sequence is that of Photosystem II reaction center protein K from Prochlorococcus marinus (strain MIT 9301).